Consider the following 234-residue polypeptide: Peroxisomal coenzyme A diphosphatase ndx-8 (234 aa).

The Nudix hydrolase domain maps to 27-162 (EQDAGVLILL…TFLIDEFYMV (136 aa)). Residues 66–90 (GGMMDDEDGQNVRRTAIREAYEEVG) carry the Nudix box motif. Mg(2+) contacts are provided by Glu-84 and Glu-88. Residues 170–190 (YPTTYGVTALMCIVVAIGLLG) form a helical membrane-spanning segment. Positions 232–234 (SKI) match the Microbody targeting signal motif.

The protein belongs to the Nudix hydrolase family. Mg(2+) is required as a cofactor. It depends on Mn(2+) as a cofactor.

It localises to the peroxisome membrane. Its function is as follows. Coenzyme A diphosphatase which mediates the cleavage of CoA into 3',5'-ADP and 4'-phosphopantetheine. This Caenorhabditis elegans protein is Peroxisomal coenzyme A diphosphatase ndx-8 (ndx-8).